We begin with the raw amino-acid sequence, 232 residues long: Small ribosomal subunit protein uS3 (232 aa).

In terms of domain architecture, KH type-2 spans 39–107 (VRQYLTKELK…PAQINIAEVR (69 aa)).

The protein belongs to the universal ribosomal protein uS3 family. Part of the 30S ribosomal subunit. Forms a tight complex with proteins S10 and S14.

Its function is as follows. Binds the lower part of the 30S subunit head. Binds mRNA in the 70S ribosome, positioning it for translation. The polypeptide is Small ribosomal subunit protein uS3 (Aliivibrio fischeri (strain MJ11) (Vibrio fischeri)).